The sequence spans 196 residues: Peroxiredoxin TSA2 (196 aa).

The Thioredoxin domain maps to Ala3–Trp161. A Glycyl lysine isopeptide (Lys-Gly) (interchain with G-Cter in ubiquitin) cross-link involves residue Lys14. The active-site Cysteine sulfenic acid (-SOH) intermediate is the Cys48. Glycyl lysine isopeptide (Lys-Gly) (interchain with G-Cter in ubiquitin) cross-links involve residues Lys89 and Lys132. Residue Thr174 is modified to Phosphothreonine.

Belongs to the peroxiredoxin family. AhpC/Prx1 subfamily. In terms of assembly, homodimer; disulfide-linked, upon oxidation.

Its subcellular location is the cytoplasm. The enzyme catalyses a hydroperoxide + [thioredoxin]-dithiol = an alcohol + [thioredoxin]-disulfide + H2O. Thiol-specific peroxidase that catalyzes the reduction of hydrogen peroxide and organic hydroperoxides to water and alcohols, respectively. Plays a role in cell protection against oxidative stress by detoxifying peroxides and as sensor of hydrogen peroxide-mediated signaling events. Can act alternatively as peroxidase and molecular chaperone. Oxidative stress and heat shock exposure cause a reversible shift of the protein structure from low MW species to high MW complexes, triggering a peroxidase-to-chaperone functional switch. The chaperone function of the protein enhances resistance to heat shock. The chain is Peroxiredoxin TSA2 from Saccharomyces cerevisiae (strain ATCC 204508 / S288c) (Baker's yeast).